A 430-amino-acid chain; its full sequence is Adenylosuccinate synthetase (430 aa).

Residues 12 to 18 (GDEGKGK) and 40 to 42 (GHT) contribute to the GTP site. The Proton acceptor role is filled by Asp13. Asp13 and Gly40 together coordinate Mg(2+). IMP is bound by residues 13 to 16 (DEGK), 38 to 41 (NAGH), Thr130, Arg144, Gln224, Thr239, and Arg303. His41 acts as the Proton donor in catalysis. 299 to 305 (VNTGRKR) serves as a coordination point for substrate. GTP is bound by residues Arg305, 331–333 (KLD), and 413–415 (STS).

This sequence belongs to the adenylosuccinate synthetase family. As to quaternary structure, homodimer. It depends on Mg(2+) as a cofactor.

It localises to the cytoplasm. The catalysed reaction is IMP + L-aspartate + GTP = N(6)-(1,2-dicarboxyethyl)-AMP + GDP + phosphate + 2 H(+). It participates in purine metabolism; AMP biosynthesis via de novo pathway; AMP from IMP: step 1/2. Plays an important role in the de novo pathway of purine nucleotide biosynthesis. Catalyzes the first committed step in the biosynthesis of AMP from IMP. This is Adenylosuccinate synthetase from Nitrobacter winogradskyi (strain ATCC 25391 / DSM 10237 / CIP 104748 / NCIMB 11846 / Nb-255).